The following is a 701-amino-acid chain: Translation factor GUF1, mitochondrial (701 aa).

Residues 1–29 (MSCCKGLTPQCVRVRLPRRPALSHPARLY) constitute a mitochondrion transit peptide. Residues 23-50 (SHPARLYSSSSSSNSHSSPSRPRLLSRP) are compositionally biased toward low complexity. Residues 23-85 (SHPARLYSSS…RSSHHSSAPM (63 aa)) form a disordered region. The 186-residue stretch at 98-283 (ERYRNFCVIA…AVIEQIPHPT (186 aa)) folds into the tr-type G domain. GTP is bound by residues 107–114 (AHVDHGKS), 172–176 (DTPGH), and 226–229 (NKID).

This sequence belongs to the TRAFAC class translation factor GTPase superfamily. Classic translation factor GTPase family. LepA subfamily.

The protein localises to the mitochondrion inner membrane. It catalyses the reaction GTP + H2O = GDP + phosphate + H(+). Functionally, promotes mitochondrial protein synthesis. May act as a fidelity factor of the translation reaction, by catalyzing a one-codon backward translocation of tRNAs on improperly translocated ribosomes. Binds to mitochondrial ribosomes in a GTP-dependent manner. In Pyricularia oryzae (strain 70-15 / ATCC MYA-4617 / FGSC 8958) (Rice blast fungus), this protein is Translation factor GUF1, mitochondrial.